We begin with the raw amino-acid sequence, 240 residues long: Protein unc-119 homolog A (240 aa).

Residues 1-12 (MKVKKGGGGTGS) show a composition bias toward gly residues. The tract at residues 1-62 (MKVKKGGGGT…PLQGKQPIGP (62 aa)) is disordered. 3 positions are modified to phosphoserine; by CK2: S37, S39, and S41. Y131 contributes to the tetradecanoate binding site.

It belongs to the PDE6D/unc-119 family. May interact with GTP-bound ARL1. Interacts with ARL2 and ARL3 (GTP-bound forms); this promotes the release of myristoylated cargo proteins. Found in a complex with ARL3, RP2 and UNC119; RP2 induces hydrolysis of GTP ARL3 in the complex, leading to the release of UNC119. Interacts with NPHP3 (when myristoylated). Interacts with CYS1 (when myristoylated). Interacts with MACIR; interaction only takes place when UNC119 is not liganded with myristoylated proteins. Interacts with CABP4; in the absence of calcium. Interacts with DNM1; leading to a decrease of DNM1 GTPase activity. Interacts with LCK; this interaction plays a crucial role in activation of LCK. Interacts with FYN. Interacts with RAB11A; in a cell cycle-dependent manner. Interacts with LYN (via SH2 and SH3 domains); leading to LYN activation. Found in a complex with ABL1, ABL2, CRK and UNC119; leading to the inhibition of CRK phosphorylation by ABL kinases. Interacts with CD44. Interacts with KLHL18 (via kelch repeats). Interacts with PPP3CA, PPP3CB and PPP3CC. Interacts with USP48; this interaction promotes UNC119 stability. Phosphorylation suppresses its interaction with KLHL18 and down-regulates its KLHL18-mediated degradation. Phosphorylated more under light conditions than dark conditions. Dephosphorylated by calcineurin. In terms of tissue distribution, localized in photoreceptor synapses in the outer plexiform layer of the retina.

It is found in the cytoplasm. It localises to the cytoskeleton. The protein resides in the microtubule organizing center. The protein localises to the centrosome. Its subcellular location is the spindle. It is found in the spindle pole. Its function is as follows. Involved in synaptic functions in photoreceptor cells, the signal transduction in immune cells as a Src family kinase activator, endosome recycling, the uptake of bacteria and endocytosis, protein trafficking in sensory neurons and as lipid-binding chaperone with specificity for a diverse subset of myristoylated proteins. Specifically binds the myristoyl moiety of a subset of N-terminally myristoylated proteins and is required for their localization. Binds myristoylated GNAT1 and is required for G-protein localization and trafficking in sensory neurons. Probably plays a role in trafficking proteins in photoreceptor cells. Plays important roles in mediating Src family kinase signals for the completion of cytokinesis via RAB11A. In Mus musculus (Mouse), this protein is Protein unc-119 homolog A (Unc119).